Here is a 317-residue protein sequence, read N- to C-terminus: UDP-3-O-acylglucosamine N-acyltransferase (317 aa).

His-229 serves as the catalytic Proton acceptor.

The protein belongs to the transferase hexapeptide repeat family. LpxD subfamily. In terms of assembly, homotrimer.

It catalyses the reaction a UDP-3-O-[(3R)-3-hydroxyacyl]-alpha-D-glucosamine + a (3R)-hydroxyacyl-[ACP] = a UDP-2-N,3-O-bis[(3R)-3-hydroxyacyl]-alpha-D-glucosamine + holo-[ACP] + H(+). It participates in bacterial outer membrane biogenesis; LPS lipid A biosynthesis. Functionally, catalyzes the N-acylation of UDP-3-O-acylglucosamine using 3-hydroxyacyl-ACP as the acyl donor. Is involved in the biosynthesis of lipid A, a phosphorylated glycolipid that anchors the lipopolysaccharide to the outer membrane of the cell. The sequence is that of UDP-3-O-acylglucosamine N-acyltransferase from Campylobacter curvus (strain 525.92).